An 89-amino-acid polypeptide reads, in one-letter code: Small ribosomal subunit protein bS20 (89 aa).

Residues 1–29 (MTLANIKSAKKRAVQSEKRRQHNASQRSM) are disordered.

The protein belongs to the bacterial ribosomal protein bS20 family.

In terms of biological role, binds directly to 16S ribosomal RNA. This Haemophilus influenzae (strain 86-028NP) protein is Small ribosomal subunit protein bS20.